The following is a 396-amino-acid chain: Elongation factor Tu 2 (396 aa).

Residues 10–206 (KPHINVGTIG…VLDSYIPEPQ (197 aa)) form the tr-type G domain. The tract at residues 19 to 26 (GHVDHGKT) is G1. 19 to 26 (GHVDHGKT) is a binding site for GTP. Threonine 26 contacts Mg(2+). Residues 60–64 (GITIN) form a G2 region. The interval 81–84 (DCPG) is G3. GTP is bound by residues 81–85 (DCPGH) and 136–139 (NKAD). The interval 136–139 (NKAD) is G4. The segment at 174–176 (SAL) is G5.

The protein belongs to the TRAFAC class translation factor GTPase superfamily. Classic translation factor GTPase family. EF-Tu/EF-1A subfamily. Monomer.

Its subcellular location is the cytoplasm. The catalysed reaction is GTP + H2O = GDP + phosphate + H(+). GTP hydrolase that promotes the GTP-dependent binding of aminoacyl-tRNA to the A-site of ribosomes during protein biosynthesis. The chain is Elongation factor Tu 2 from Nitrosomonas eutropha (strain DSM 101675 / C91 / Nm57).